The sequence spans 376 residues: Succinyl-diaminopimelate desuccinylase (376 aa).

Residue His67 coordinates Zn(2+). The active site involves Asp69. Asp100 contributes to the Zn(2+) binding site. Glu134 (proton acceptor) is an active-site residue. Residues Glu135, Glu163, and His349 each contribute to the Zn(2+) site.

The protein belongs to the peptidase M20A family. DapE subfamily. In terms of assembly, homodimer. Requires Zn(2+) as cofactor. It depends on Co(2+) as a cofactor.

It carries out the reaction N-succinyl-(2S,6S)-2,6-diaminopimelate + H2O = (2S,6S)-2,6-diaminopimelate + succinate. It functions in the pathway amino-acid biosynthesis; L-lysine biosynthesis via DAP pathway; LL-2,6-diaminopimelate from (S)-tetrahydrodipicolinate (succinylase route): step 3/3. Functionally, catalyzes the hydrolysis of N-succinyl-L,L-diaminopimelic acid (SDAP), forming succinate and LL-2,6-diaminopimelate (DAP), an intermediate involved in the bacterial biosynthesis of lysine and meso-diaminopimelic acid, an essential component of bacterial cell walls. This chain is Succinyl-diaminopimelate desuccinylase, found in Haemophilus ducreyi (strain 35000HP / ATCC 700724).